The primary structure comprises 164 residues: Lipoprotein signal peptidase (164 aa).

Helical transmembrane passes span 12 to 32 (WLWL…LILQ), 70 to 90 (WFFA…MYRL), and 102 to 122 (ALII…GFVV). Residues Asp-123 and Asp-141 contribute to the active site. The chain crosses the membrane as a helical span at residues 137-157 (FNLADTAICVGAALIVLEGFL).

The protein belongs to the peptidase A8 family.

It localises to the cell inner membrane. The catalysed reaction is Release of signal peptides from bacterial membrane prolipoproteins. Hydrolyzes -Xaa-Yaa-Zaa-|-(S,diacylglyceryl)Cys-, in which Xaa is hydrophobic (preferably Leu), and Yaa (Ala or Ser) and Zaa (Gly or Ala) have small, neutral side chains.. It functions in the pathway protein modification; lipoprotein biosynthesis (signal peptide cleavage). Its function is as follows. This protein specifically catalyzes the removal of signal peptides from prolipoproteins. The sequence is that of Lipoprotein signal peptidase from Shigella boydii serotype 4 (strain Sb227).